The primary structure comprises 348 residues: Protein RecA (348 aa).

65–72 (GPESSGKT) contacts ATP. The segment covering 326-336 (LLTPAEEKPET) has biased composition (basic and acidic residues). Residues 326–348 (LLTPAEEKPETDAAPEIEENEEF) are disordered. The span at 338–348 (AAPEIEENEEF) shows a compositional bias: acidic residues.

Belongs to the RecA family.

It is found in the cytoplasm. In terms of biological role, can catalyze the hydrolysis of ATP in the presence of single-stranded DNA, the ATP-dependent uptake of single-stranded DNA by duplex DNA, and the ATP-dependent hybridization of homologous single-stranded DNAs. It interacts with LexA causing its activation and leading to its autocatalytic cleavage. In Aliivibrio fischeri (strain ATCC 700601 / ES114) (Vibrio fischeri), this protein is Protein RecA.